We begin with the raw amino-acid sequence, 255 residues long: 4-diphosphocytidyl-2-C-methyl-D-erythritol kinase (255 aa).

Residue Lys-9 is part of the active site. 95–105 (PSQAGLGGGSS) lines the ATP pocket. Asp-137 is an active-site residue.

This sequence belongs to the GHMP kinase family. IspE subfamily.

It carries out the reaction 4-CDP-2-C-methyl-D-erythritol + ATP = 4-CDP-2-C-methyl-D-erythritol 2-phosphate + ADP + H(+). The protein operates within isoprenoid biosynthesis; isopentenyl diphosphate biosynthesis via DXP pathway; isopentenyl diphosphate from 1-deoxy-D-xylulose 5-phosphate: step 3/6. Its function is as follows. Catalyzes the phosphorylation of the position 2 hydroxy group of 4-diphosphocytidyl-2C-methyl-D-erythritol. This Sulfurovum sp. (strain NBC37-1) protein is 4-diphosphocytidyl-2-C-methyl-D-erythritol kinase.